A 409-amino-acid polypeptide reads, in one-letter code: Proteasome-activating nucleotidase (409 aa).

Residues 1–22 are disordered; the sequence is MTLSSAGGSRSHRHNGGHSERD. Residues 23–58 are a coiled coil; the sequence is VEIRILKDKVRSLTKEKISLQKELEYYKNEITKLLS. ATP-binding positions include 183 to 188 and His322; that span reads GTGKTL.

The protein belongs to the AAA ATPase family. In terms of assembly, homohexamer. The hexameric complex has a two-ring architecture resembling a top hat that caps the 20S proteasome core at one or both ends. Upon ATP-binding, the C-terminus of PAN interacts with the alpha-rings of the proteasome core by binding to the intersubunit pockets.

Its subcellular location is the cytoplasm. Functionally, ATPase which is responsible for recognizing, binding, unfolding and translocation of substrate proteins into the archaeal 20S proteasome core particle. Is essential for opening the gate of the 20S proteasome via an interaction with its C-terminus, thereby allowing substrate entry and access to the site of proteolysis. Thus, the C-termini of the proteasomal ATPase function like a 'key in a lock' to induce gate opening and therefore regulate proteolysis. Unfolding activity requires energy from ATP hydrolysis, whereas ATP binding alone promotes ATPase-20S proteasome association which triggers gate opening, and supports translocation of unfolded substrates. This is Proteasome-activating nucleotidase from Aeropyrum pernix (strain ATCC 700893 / DSM 11879 / JCM 9820 / NBRC 100138 / K1).